Here is a 273-residue protein sequence, read N- to C-terminus: Dermonecrotic toxin LruSicTox-alphaIC1a (273 aa).

Residue His5 is part of the active site. Mg(2+)-binding residues include Glu25 and Asp27. The active-site Nucleophile is the His41. Intrachain disulfides connect Cys45-Cys51 and Cys47-Cys190. Asp85 provides a ligand contact to Mg(2+).

The protein belongs to the arthropod phospholipase D family. Class II subfamily. It depends on Mg(2+) as a cofactor. In terms of tissue distribution, expressed by the venom gland.

Its subcellular location is the secreted. The catalysed reaction is an N-(acyl)-sphingosylphosphocholine = an N-(acyl)-sphingosyl-1,3-cyclic phosphate + choline. The enzyme catalyses an N-(acyl)-sphingosylphosphoethanolamine = an N-(acyl)-sphingosyl-1,3-cyclic phosphate + ethanolamine. It catalyses the reaction a 1-acyl-sn-glycero-3-phosphocholine = a 1-acyl-sn-glycero-2,3-cyclic phosphate + choline. It carries out the reaction a 1-acyl-sn-glycero-3-phosphoethanolamine = a 1-acyl-sn-glycero-2,3-cyclic phosphate + ethanolamine. Dermonecrotic toxins cleave the phosphodiester linkage between the phosphate and headgroup of certain phospholipids (sphingolipid and lysolipid substrates), forming an alcohol (often choline) and a cyclic phosphate. This toxin acts on sphingomyelin (SM). It may also act on ceramide phosphoethanolamine (CPE), lysophosphatidylcholine (LPC) and lysophosphatidylethanolamine (LPE), but not on lysophosphatidylserine (LPS), and lysophosphatidylglycerol (LPG). It acts by transphosphatidylation, releasing exclusively cyclic phosphate products as second products. Induces dermonecrosis, hemolysis, increased vascular permeability, edema, inflammatory response, and platelet aggregation. In Loxosceles rufescens (Mediterranean recluse spider), this protein is Dermonecrotic toxin LruSicTox-alphaIC1a.